The primary structure comprises 347 residues: Mitochondrial carrier protein rim2 (347 aa).

Solcar repeat units follow at residues 32–136, 146–234, and 256–345; these read PPPL…GKRI, ENSQ…FKHA, and LDWG…IMHF. 6 helical membrane-spanning segments follow: residues 38–58, 105–125, 152–172, 214–233, 262–282, and 317–338; these read FIAGGVAGMLGAIATAPLDVV, TRALFRGLGPNLIGTIPARSI, LMAAAIAGVITSAATNPIWLV, SLLGVGESTLQWVLYEKFKH, LGGAGIAKFMAAGIAYPHEVV, and LYGGLTAHLLRVVPNACILFGS.

The protein localises to the mitochondrion inner membrane. The catalysed reaction is 5-methyl-UTP(out) + UTP(in) = 5-methyl-UTP(in) + UTP(out). Mitochondrial transporter that imports/exports pyrimidine nucleotides into and from mitochondria. Selectively transports uridine, thymidine, and cytosine (deoxy)nucleoside di- and triphosphates by an antiport mechanism. Also transports, with lower efficiency, uridine, thymidine, and cytosine (deoxy)nucleoside monophosphates as well as guanosine (deoxy)nucleoside di- and triphosphate. May import (deoxy)nucleoside triphosphates in exchange for intramitochondrial (deoxy)nucleoside monophosphates, thus providing precursors necessary for de novo synthesis of mitochondrial DNA and RNA while exporting products of their catabolism. Mediates the transport of iron and other divalent metal ions like copper and zinc across the mitochondrial inner membrane in a pyrimidine nucleotide-dependent fashion. Catalyzes the co-import of pyrimidine nucleotides and divalent metal ions including ferrous iron. Participates in mitochondrial genome maintenance, regulation of mitochondrial membrane potential and mitochondrial respiration. This chain is Mitochondrial carrier protein rim2 (rim2), found in Schizosaccharomyces pombe (strain 972 / ATCC 24843) (Fission yeast).